The following is a 141-amino-acid chain: Hemoglobin subunit alpha-D (141 aa).

The 141-residue stretch at 1–141 (MLTAEDKKLI…VAAVLAEKYR (141 aa)) folds into the Globin domain. Heme b-binding residues include His58 and His87.

This sequence belongs to the globin family. Heterotetramer of two alpha-D chains and two beta chains. As to expression, red blood cells.

In terms of biological role, involved in oxygen transport from the lung to the various peripheral tissues. This chain is Hemoglobin subunit alpha-D (HBAD), found in Accipiter gentilis (Northern goshawk).